The chain runs to 253 residues: Troponin T, fast skeletal muscle isoforms (253 aa).

The segment covering 1 to 25 (MSDTEEVEHGEEEYEEEEEVQEEEV) has biased composition (acidic residues). 2 disordered regions span residues 1–58 (MSDT…DIQK) and 97–178 (RAER…VLAE). N-acetylserine is present on serine 2. Basic and acidic residues-rich tracts occupy residues 46 to 58 (PEGE…DIQK), 97 to 139 (RAER…DDLK), and 167 to 178 (TARETKKKVLAE).

The protein belongs to the troponin T family.

Functionally, troponin T is the tropomyosin-binding subunit of troponin, the thin filament regulatory complex which confers calcium-sensitivity to striated muscle actomyosin ATPase activity. In Coturnix japonica (Japanese quail), this protein is Troponin T, fast skeletal muscle isoforms (TNNT3).